The sequence spans 435 residues: Elongation factor 1-alpha (435 aa).

The 226-residue stretch at Lys-4–Val-229 folds into the tr-type G domain. Residues Gly-13 to Ser-20 form a G1 region. A GTP-binding site is contributed by Gly-13 to Ser-20. A Mg(2+)-binding site is contributed by Ser-20. The G2 stretch occupies residues Gly-69–Asn-73. Residues Asp-90–Gly-93 are G3. GTP-binding positions include Asp-90 to His-94 and Thr-152 to Asp-155. Residues Thr-152–Asp-155 form a G4 region. The tract at residues Val-193–Ile-195 is G5.

The protein belongs to the TRAFAC class translation factor GTPase superfamily. Classic translation factor GTPase family. EF-Tu/EF-1A subfamily.

The protein localises to the cytoplasm. It carries out the reaction GTP + H2O = GDP + phosphate + H(+). GTP hydrolase that promotes the GTP-dependent binding of aminoacyl-tRNA to the A-site of ribosomes during protein biosynthesis. The chain is Elongation factor 1-alpha from Metallosphaera sedula (strain ATCC 51363 / DSM 5348 / JCM 9185 / NBRC 15509 / TH2).